The sequence spans 745 residues: Immunoglobulin superfamily containing leucine-rich repeat protein 2 (745 aa).

A signal peptide spans 1-18; sequence MFPLRALWLVWALLGVAG. Residues 19–51 form the LRRNT domain; that stretch reads SCPEPCACVDKYAHQFADCAYKELREVPEGLPA. Topologically, residues 19-589 are extracellular; sequence SCPEPCACVD…VFSTKKELPS (571 aa). An N-linked (GlcNAc...) asparagine glycan is attached at Asn-52. 5 LRR repeats span residues 52-73, 76-97, 100-123, 124-145, and 148-169; these read NVTTLSLSANKITVLRRGAFAD, QVTSLWLAHNEVRTVEPGALAV, QLKNLDLSHNFISSFPWSDLRNLS, ALQLLKMNHNRLGSLPRDALGA, and DLRSLRINNNRLRTLAPGTFDA. An N-linked (GlcNAc...) asparagine glycan is attached at Asn-121. One can recognise an LRRCT domain in the interval 181–232; sequence NPFHCGCGLVWLQAWAASTRVSLPEPDSIACASPPALQGVPVYRLPALPCAP. Positions 233–371 constitute an Ig-like domain; the sequence is PSVHLSAEPP…GANSTSIRVA (139 aa). The cysteines at positions 260 and 355 are disulfide-linked. Residues 287 to 326 are disordered; it reads VLSGEDDGVGAEEGEGEGDGDLLTQTQAQTPTPAPAWPAP. The span at 290–306 shows a compositional bias: acidic residues; the sequence is GEDDGVGAEEGEGEGDG. 2 N-linked (GlcNAc...) asparagine glycosylation sites follow: Asn-337 and Asn-364. The tract at residues 375–466 is disordered; sequence TGPPKHAPGA…QRCGNGDPSR (92 aa). Positions 431-449 are enriched in acidic residues; sequence TETEPEEDTSEGEEAEDQI. Residues Asn-474 and Asn-563 are each glycosylated (N-linked (GlcNAc...) asparagine). A helical membrane pass occupies residues 590-610; it reads LLVIVAVSVFLLVLATVPLLG. At 611 to 745 the chain is on the cytoplasmic side; sequence AACCHLLAKH…INGNYRQTAG (135 aa). The interval 656–722 is disordered; it reads KSYPAGGEAG…FEAGSEYSDR (67 aa). Acidic residues predominate over residues 665–683; that stretch reads GGEEPEDVQGEGLDEDAEQ. Tyr-719 is modified (phosphotyrosine). Position 720 is a phosphoserine (Ser-720).

As to quaternary structure, homomultimer. Interacts with NTRK1/TrkA.

Its subcellular location is the cell membrane. In terms of biological role, required for axon extension during neural development. This Homo sapiens (Human) protein is Immunoglobulin superfamily containing leucine-rich repeat protein 2 (ISLR2).